The primary structure comprises 182 residues: Large ribosomal subunit protein uL13 (182 aa).

The protein belongs to the universal ribosomal protein uL13 family. Part of the 50S ribosomal subunit.

This protein is one of the early assembly proteins of the 50S ribosomal subunit, although it is not seen to bind rRNA by itself. It is important during the early stages of 50S assembly. This is Large ribosomal subunit protein uL13 from Pyrobaculum neutrophilum (strain DSM 2338 / JCM 9278 / NBRC 100436 / V24Sta) (Thermoproteus neutrophilus).